Here is a 142-residue protein sequence, read N- to C-terminus: gSG7 salivary protein (142 aa).

Positions 1–26 are cleaved as a signal peptide; that stretch reads MAVRMTVILPLAMALICLMQAEPATA. 2 disulfide bridges follow: cysteine 84/cysteine 139 and cysteine 107/cysteine 117.

As to quaternary structure, associates with activated host C3-convertase complex C3bBb (C3-CFB). Interacts with host properdin (CFP), a regulator of the alternate pathway of complement. Female salivary gland (at protein level).

It is found in the secreted. Its function is as follows. Salivary protein that potently inhibits the alternative pathway of complement system activation in the host while having no inhibitory effect on the classical or lectin pathways. Binds and stabilizes activated host C3-convertase complex C3bBb (C3-CFB) and inhibits its convertase activity. Enhances accumulation of C3bBb on immobilized properdin. The chain is gSG7 salivary protein from Anopheles albimanus (New world malaria mosquito).